A 322-amino-acid polypeptide reads, in one-letter code: Olfactory receptor 11L1 (322 aa).

The Extracellular portion of the chain corresponds to 1–25; sequence MEPQNTSTVTNFQLLGFQNLLEWQA. Asn5 carries N-linked (GlcNAc...) asparagine glycosylation. The chain crosses the membrane as a helical span at residues 26 to 46; sequence LLFVIFLLIYCLTIIGNVVII. Residues 47–54 lie on the Cytoplasmic side of the membrane; it reads TVVSQGLR. A helical transmembrane segment spans residues 55–75; sequence LHSPMYMFLQHLSFLEVWYTS. Topologically, residues 76–99 are extracellular; it reads TTVPLLLANLLSWGQAISFSACMA. A disulfide bond links Cys97 and Cys189. Residues 100–120 form a helical membrane-spanning segment; sequence QLYFFVFLGATECFLLAFMAY. Residues 121–139 are Cytoplasmic-facing; sequence DRYLAICSPLRYPFLMHRG. Residues 140–160 form a helical membrane-spanning segment; that stretch reads LCARLVVVSWCTGVSTGFLPS. At 161 to 197 the chain is on the extracellular side; it reads LMISRLDFCGRNQINHFFCDLPPLMQLSCSRVYITEV. Residues 198 to 217 traverse the membrane as a helical segment; it reads TIFILSIAVLCICFFLTLGP. The Cytoplasmic segment spans residues 218–237; that stretch reads YVFIVSSILRIPSTSGRRKT. A helical transmembrane segment spans residues 238-258; that stretch reads FSTCGSHLAVVTLYYGTMISM. The Extracellular portion of the chain corresponds to 259–271; that stretch reads YVCPSPHLLPEIN. Residues 272–292 form a helical membrane-spanning segment; the sequence is KIISVFYTVVTPLLNPVIYSL. The Cytoplasmic segment spans residues 293–322; sequence RNKDFKEAVRKVMRRKCGILWSTSKRKFLY.

This sequence belongs to the G-protein coupled receptor 1 family.

The protein resides in the cell membrane. In terms of biological role, odorant receptor. This is Olfactory receptor 11L1 (OR11L1) from Homo sapiens (Human).